Consider the following 85-residue polypeptide: Toxin BmKa1 (85 aa).

The signal sequence occupies residues 1–19 (MNYLVFFSLALLLMTGVGS). In terms of domain architecture, LCN-type CS-alpha/beta spans 21–83 (RDGYIADDKN…VPIRVPGKCN (63 aa)). Cystine bridges form between C31–C82, C35–C55, C41–C65, and C45–C67.

The protein belongs to the long (4 C-C) scorpion toxin superfamily. Sodium channel inhibitor family. Alpha subfamily. In terms of tissue distribution, expressed by the venom gland.

The protein localises to the secreted. Alpha toxins bind voltage-independently at site-3 of sodium channels (Nav) and inhibit the inactivation of the activated channels, thereby blocking neuronal transmission. In Olivierus martensii (Manchurian scorpion), this protein is Toxin BmKa1.